A 379-amino-acid chain; its full sequence is uncharacterized protein (379 aa).

Disordered stretches follow at residues 1 to 25 (MASDWRRQSTSRGIPNEGQNDEKGK), 128 to 158 (QGKTTSATTSNSTIRGKPSFGRENSAKIERT), and 355 to 379 (TEKTSILSPRRRQKRMRSLSSQGDI). Positions 128-141 (QGKTTSATTSNSTI) are enriched in polar residues.

This is an uncharacterized protein from Caenorhabditis elegans.